The following is a 290-amino-acid chain: Arylamine N-acetyltransferase 2 (290 aa).

Catalysis depends on Cys-68, which acts as the Acyl-thioester intermediate. Residues Thr-103 and Gly-104 each coordinate CoA. Val-106–His-107 contributes to the substrate binding site. Catalysis depends on residues His-107 and Asp-122. Residues Tyr-208, Thr-214, and Ser-287 each contribute to the CoA site.

Belongs to the arylamine N-acetyltransferase family.

The protein resides in the cytoplasm. The catalysed reaction is an arylamine + acetyl-CoA = an N-acetylarylamine + CoA. It carries out the reaction an N-hydroxyarylamine + acetyl-CoA = an N-acetoxyarylamine + CoA. Its function is as follows. Catalyzes the N- or O-acetylation of various arylamine and heterocyclic amine substrates. Participates in the detoxification of a plethora of hydrazine and arylamine drugs, and is able to bioactivate several known carcinogens. This Homo sapiens (Human) protein is Arylamine N-acetyltransferase 2 (NAT2).